The following is a 1010-amino-acid chain: Contactin-1 (1010 aa).

The N-terminal stretch at 1–19 is a signal peptide; the sequence is MRFFISHLVTLCFIFCVAD. Ig-like C2-type domains lie at 33-123, 132-215, 232-317, 322-398, 404-491, and 496-592; these read PVFE…ATLS, PEEH…KSVF, PADI…ARVY, PEWV…AELK, PTFE…GVLE, and TRIT…LVVR. 2 cysteine pairs are disulfide-bonded: C57/C106 and C150/C203. 2 N-linked (GlcNAc...) asparagine glycosylation sites follow: N200 and N249. C254 and C301 are oxidised to a cystine. The N-linked (GlcNAc...) asparagine glycan is linked to N329. 2 disulfide bridges follow: C343-C382 and C427-C475. N-linked (GlcNAc...) asparagine glycosylation is found at N448, N464, N485, and N512. A disulfide bridge connects residues C517 and C574. N-linked (GlcNAc...) asparagine glycosylation is present at N582. Fibronectin type-III domains follow at residues 597 to 695, 700 to 797, 802 to 897, and 899 to 990; these read PPGG…TEGA, APSD…SAQD, VPTD…APPS, and RPRI…TAGV. Residues 679–689 are compositionally biased toward polar residues; that stretch reads GTGEPSMPSQR. Residues 679-708 are disordered; it reads GTGEPSMPSQRIRTEGAPPNVAPSDVGGGG. N-linked (GlcNAc...) asparagine glycosylation occurs at N924. The GPI-anchor amidated serine moiety is linked to residue S984. The propeptide at 985–1010 is removed in mature form; it reads GATAGVPTLLLGLVLPALGVLAYSGF.

The protein belongs to the immunoglobulin superfamily. Contactin family. Interacts with TNR.

It is found in the cell membrane. In terms of biological role, mediates cell surface interactions during nervous system development. Interaction with TNR enhances the neurite outgrowth. The protein is Contactin-1 (CNTN1) of Gallus gallus (Chicken).